The primary structure comprises 372 residues: Cytochrome b (372 aa).

4 helical membrane passes run phenylalanine 25 to valine 45, tryptophan 69 to methionine 90, tryptophan 105 to leucine 125, and phenylalanine 170 to methionine 190. Residues histidine 75 and histidine 89 each contribute to the heme b site. Histidine 174 and histidine 188 together coordinate heme b. Histidine 193 contacts a ubiquinone. The next 4 membrane-spanning stretches (helical) occupy residues tyrosine 218–leucine 238, leucine 280–histidine 300, phenylalanine 312–threonine 332, and tyrosine 339–leucine 358.

The protein belongs to the cytochrome b family. The cytochrome bc1 complex contains 3 respiratory subunits (MT-CYB, CYC1 and UQCRFS1), 2 core proteins (UQCRC1 and UQCRC2) and probably 6 low-molecular weight proteins. It depends on heme b as a cofactor.

Its subcellular location is the mitochondrion inner membrane. Functionally, component of the ubiquinol-cytochrome c reductase complex (complex III or cytochrome b-c1 complex) that is part of the mitochondrial respiratory chain. The b-c1 complex mediates electron transfer from ubiquinol to cytochrome c. Contributes to the generation of a proton gradient across the mitochondrial membrane that is then used for ATP synthesis. The chain is Cytochrome b (MT-CYB) from Sanzinia madagascariensis (Madagascar tree boa).